The primary structure comprises 96 residues: MSAVLSTENGLILKLYIQPKASRDQIVGLHGDELKVAITAPPVDGQANTHLVKFIAKQFRVAKSQVIIEKGELGRHKQIKVINPQQIPPEVTILLE.

The protein belongs to the UPF0235 family.

This is UPF0235 protein YPN_3141 from Yersinia pestis bv. Antiqua (strain Nepal516).